The primary structure comprises 376 residues: Dihydroorotate dehydrogenase (quinone) (376 aa).

FMN contacts are provided by residues 78–82 (AGFDK) and Thr-102. Substrate is bound at residue Lys-82. 127-131 (NRMGF) provides a ligand contact to substrate. Residues Asn-157 and Asn-190 each coordinate FMN. Position 190 (Asn-190) interacts with substrate. Ser-193 serves as the catalytic Nucleophile. Substrate is bound at residue Asn-195. Residues Lys-228 and Thr-256 each coordinate FMN. 257–258 (NT) provides a ligand contact to substrate. Residues Gly-286, Gly-315, and 336 to 337 (YT) each bind FMN.

It belongs to the dihydroorotate dehydrogenase family. Type 2 subfamily. Monomer. Requires FMN as cofactor.

The protein resides in the cell membrane. The enzyme catalyses (S)-dihydroorotate + a quinone = orotate + a quinol. It functions in the pathway pyrimidine metabolism; UMP biosynthesis via de novo pathway; orotate from (S)-dihydroorotate (quinone route): step 1/1. Its function is as follows. Catalyzes the conversion of dihydroorotate to orotate with quinone as electron acceptor. This chain is Dihydroorotate dehydrogenase (quinone), found in Nostoc sp. (strain PCC 7120 / SAG 25.82 / UTEX 2576).